We begin with the raw amino-acid sequence, 189 residues long: Potassium-transporting ATPase KdpC subunit (189 aa).

Residues 6-26 (PAILLFIMFTIICGGIYPALV) form a helical membrane-spanning segment.

Belongs to the KdpC family. As to quaternary structure, the system is composed of three essential subunits: KdpA, KdpB and KdpC.

Its subcellular location is the cell inner membrane. Functionally, part of the high-affinity ATP-driven potassium transport (or Kdp) system, which catalyzes the hydrolysis of ATP coupled with the electrogenic transport of potassium into the cytoplasm. This subunit acts as a catalytic chaperone that increases the ATP-binding affinity of the ATP-hydrolyzing subunit KdpB by the formation of a transient KdpB/KdpC/ATP ternary complex. The sequence is that of Potassium-transporting ATPase KdpC subunit from Trichlorobacter lovleyi (strain ATCC BAA-1151 / DSM 17278 / SZ) (Geobacter lovleyi).